We begin with the raw amino-acid sequence, 173 residues long: Large ribosomal subunit protein uL10 (173 aa).

This sequence belongs to the universal ribosomal protein uL10 family. As to quaternary structure, part of the ribosomal stalk of the 50S ribosomal subunit. The N-terminus interacts with L11 and the large rRNA to form the base of the stalk. The C-terminus forms an elongated spine to which L12 dimers bind in a sequential fashion forming a multimeric L10(L12)X complex.

Its function is as follows. Forms part of the ribosomal stalk, playing a central role in the interaction of the ribosome with GTP-bound translation factors. The chain is Large ribosomal subunit protein uL10 from Micrococcus luteus (strain ATCC 4698 / DSM 20030 / JCM 1464 / CCM 169 / CCUG 5858 / IAM 1056 / NBRC 3333 / NCIMB 9278 / NCTC 2665 / VKM Ac-2230) (Micrococcus lysodeikticus).